Consider the following 396-residue polypeptide: MEQEFVKALPILHHLMKAGHQAYFVGGAVRDSYMKRKIGDVDIATSASPNEVERLFKRTVDVGKEHGTVIVLWEDETYEVTTFRAESEYKDYRRPEAVRFITSLSEDLKRRDLTINAMAMSAEGELLDYFGGAHDIGQKLIRTVGNPEDRFREDALRMMRAVRFMSQLGFLLEKETREAVIKDRELLAHVSVERKTVEFEKLLQGASSQEAIQTMVQTGLIQELPGLSGYEQQMLEASGFPFSSLDAREERWAALLLFLGLCPKSAEAFLKQWKLPGKVIKKAMQIISVYPAQLEAEAMYRAGEALFSAVKIGMLKKHKTIDEQKLKEVQSLYEQLPIKSLRDLDISGADLMELRNRRAGKWVAEELRRIEEAVLAGKLPNRKHDIKEWLASWDQH.

Gly27 and Arg30 together coordinate ATP. 2 residues coordinate CTP: Gly27 and Arg30. Mg(2+) contacts are provided by Asp40 and Asp42. Positions 111, 154, 157, 160, and 163 each coordinate ATP. Arg111, Asp154, Arg157, Arg160, and Arg163 together coordinate CTP.

It belongs to the tRNA nucleotidyltransferase/poly(A) polymerase family. Bacterial CCA-adding enzyme type 3 subfamily. As to quaternary structure, homodimer. Mg(2+) serves as cofactor.

The enzyme catalyses a tRNA precursor + 2 CTP + ATP = a tRNA with a 3' CCA end + 3 diphosphate. It catalyses the reaction a tRNA with a 3' CCA end + 2 CTP + ATP = a tRNA with a 3' CCACCA end + 3 diphosphate. Its function is as follows. Catalyzes the addition and repair of the essential 3'-terminal CCA sequence in tRNAs without using a nucleic acid template. Adds these three nucleotides in the order of C, C, and A to the tRNA nucleotide-73, using CTP and ATP as substrates and producing inorganic pyrophosphate. tRNA 3'-terminal CCA addition is required both for tRNA processing and repair. Also involved in tRNA surveillance by mediating tandem CCA addition to generate a CCACCA at the 3' terminus of unstable tRNAs. While stable tRNAs receive only 3'-terminal CCA, unstable tRNAs are marked with CCACCA and rapidly degraded. The polypeptide is CCA-adding enzyme (Bacillus velezensis (strain DSM 23117 / BGSC 10A6 / LMG 26770 / FZB42) (Bacillus amyloliquefaciens subsp. plantarum)).